Reading from the N-terminus, the 427-residue chain is UPF0415 protein C7orf25 homolog (427 aa).

Residues 200-234 show a composition bias toward acidic residues; it reads GGEEEDEEDQEGDHEDLVEEEEDGEDDNDDDSDDT. A disordered region spans residues 200 to 236; that stretch reads GGEEEDEEDQEGDHEDLVEEEEDGEDDNDDDSDDTDL.

The protein belongs to the UPF0415 family.

The protein is UPF0415 protein C7orf25 homolog of Danio rerio (Zebrafish).